Consider the following 103-residue polypeptide: Histone H4 (103 aa).

Over residues 1-14 the composition is skewed to gly residues; sequence MTGRGKGGKGLGKG. A disordered region spans residues 1–20; the sequence is MTGRGKGGKGLGKGGAKRHR. N6-acetyl-N6-methyllysine; alternate is present on lysine 6. N6-methyllysine; alternate is present on residues lysine 6, lysine 9, and lysine 13. Position 13 is an N6-acetyl-N6-methyllysine; alternate (lysine 13). Residues 17-21 mediate DNA binding; sequence KRHRK. Lysine 92 carries the N6-glutaryllysine modification.

It belongs to the histone H4 family. As to quaternary structure, the nucleosome is a histone octamer containing two molecules each of H2A, H2B, H3 and H4 assembled in one H3-H4 heterotetramer and two H2A-H2B heterodimers. The octamer wraps approximately 147 bp of DNA. Post-translationally, glutarylation at Lys-92 (H4K91glu) destabilizes nucleosomes by promoting dissociation of the H2A-H2B dimers from nucleosomes.

It is found in the nucleus. The protein localises to the chromosome. In terms of biological role, core component of nucleosome. Nucleosomes wrap and compact DNA into chromatin, limiting DNA accessibility to the cellular machineries which require DNA as a template. Histones thereby play a central role in transcription regulation, DNA repair, DNA replication and chromosomal stability. DNA accessibility is regulated via a complex set of post-translational modifications of histones, also called histone code, and nucleosome remodeling. The chain is Histone H4 (hH4-1) from Neurospora crassa (strain ATCC 24698 / 74-OR23-1A / CBS 708.71 / DSM 1257 / FGSC 987).